Reading from the N-terminus, the 126-residue chain is Protein ApaG (126 aa).

One can recognise an ApaG domain in the interval 2–126 (SALDTSIRVE…FRLATPGLLH (125 aa)).

This Shewanella baltica (strain OS223) protein is Protein ApaG.